A 608-amino-acid chain; its full sequence is MASLQQGEKQLFEKFWKGTFKAVATPRPESIIVASITARKPMPRTEPQSSLLLPDQDGPSEKLGQHLAPEALGTNSWGREKACRELDPARAHSASQDRDPTPPPSSRGKKKKKKSTRKKRRRSPSYSPSPVKKKKKKSSKKHKRHRSFSKKRRHSSCSPKSKRREEKRHKKQSRSRKSHRHRHHRCPSRSQSSELRSPSCESRHRGRSPEEGRKSRRTHSRRCSKNHCKVSPDARSSHLPSQPLPRLGFLSARGVITGSGSAADLFSKSASPLAATRGRSQEYDSGNDTSSPPSTQTSSARSRGQEKGSPGGDLSKSRDLNCGNTSDSGNSFTTSSPQNKGAVLETVSPACRSRESRGFQSPCLQCAEVKKSSLVPSTARSSPIKECSRSSSYTSTRSSSPSSRSPNPRASPRYTRSRSTSSEKRSYSRSPSYSSKSGKRSPPSRSSRSRRSPSYSRYSPSRERDLKYGEKEPQPRERARRRRRSYSPMRKRRRDSPSHLEARRITSARKRPIPYYRPSPSSSSSLSSASSWYSSSSSSSSSSSRSPSRSYSRSRSPSRSHSSRSQTRSRTRTSRSSSSRSLSLGSRSRSRNRSLSYSSAESYASTRR.

2 disordered regions span residues 34–246 (ASIT…PLPR) and 261–608 (SAAD…STRR). Positions 78-100 (GREKACRELDPARAHSASQDRDP) are enriched in basic and acidic residues. Composition is skewed to basic residues over residues 107-123 (RGKK…RRRS) and 131-187 (VKKK…HRCP). Positions 188–200 (SRSQSSELRSPSC) are enriched in low complexity. Residues 201-213 (ESRHRGRSPEEGR) show a composition bias toward basic and acidic residues. Residues 214–228 (KSRRTHSRRCSKNHC) are compositionally biased toward basic residues. Positions 289–299 (TSSPPSTQTSS) are enriched in low complexity. Residues 322–339 (CGNTSDSGNSFTTSSPQN) show a composition bias toward polar residues. 2 stretches are compositionally biased toward low complexity: residues 389-420 (RSSS…SRST) and 428-459 (SRSP…SRYS). A compositionally biased stretch (basic and acidic residues) spans 460–477 (PSRERDLKYGEKEPQPRE). The span at 478–494 (RARRRRRSYSPMRKRRR) shows a compositional bias: basic residues. Residues 495–504 (DSPSHLEARR) are compositionally biased toward basic and acidic residues. Positions 518 to 555 (PSPSSSSSLSSASSWYSSSSSSSSSSSRSPSRSYSRSR) are enriched in low complexity. Basic residues predominate over residues 556–573 (SPSRSHSSRSQTRSRTRT). The segment covering 574-608 (SRSSSSRSLSLGSRSRSRNRSLSYSSAESYASTRR) has biased composition (low complexity).

This sequence belongs to the nSR100 family. In terms of processing, phosphorylated. In terms of tissue distribution, specifically expressed in neuronal cells (at protein level). Expressed in adult nervous system and sensory organ tissues.

The protein localises to the nucleus. In terms of biological role, splicing factor specifically required for neural cell differentiation. Acts in conjunction with nPTB/PTBP2 by binding directly to its regulated target transcripts and promotes neural-specific exon inclusion in many genes that function in neural cell differentiation. Required to promote the inclusion of neural-specific exon 10 in nPTB/PTBP2, leading to increased expression of neural-specific nPTB/PTBP2. Also promotes the inclusion of exon 16 in DAAM1 in neuron extracts. Promotes alternative splicing of REST transcripts to produce REST isoform 2 (REST4) with greatly reduced repressive activity, thereby activating expression of REST targets in neural cells. Plays an important role during embryonic development as well as in the proper functioning of the adult nervous system. Regulates alternative splicing events in genes with important neuronal functions. In Mus musculus (Mouse), this protein is Serine/arginine repetitive matrix protein 4 (Srrm4).